Reading from the N-terminus, the 462-residue chain is Solute carrier family 41 member 3 (462 aa).

The next 9 membrane-spanning stretches (helical) occupy residues 41-61 (CQVAIPILLSGLGMMTAGLVM), 121-141 (LAVVQVQATVVGLLAAVASLM), 163-183 (VITAFLAALALGILMICIVIG), 194-214 (IATPIAASLGDLITLSILALM), 225-245 (WYLTPLVCIGFLALTPLWIFI), 258-278 (YGWFPIILAMIISSFGGLILS), 351-371 (VLLFLVVPGHLIFFYLICLVE), 380-400 (IFVLLYLMAGMMQVVILLYLA), and 424-444 (GLGDLLGTSLLALCFLLDWLL).

The protein belongs to the SLC41A transporter family.

Its subcellular location is the mitochondrion inner membrane. The enzyme catalyses Mg(2+)(in) + 2 Na(+)(out) = Mg(2+)(out) + 2 Na(+)(in). Functionally, na(+)/Mg(2+) ion exchanger that acts as a predominant Mg(2+) efflux system at the mitochondrial inner membrane. The protein is Solute carrier family 41 member 3 (Slc41a3) of Rattus norvegicus (Rat).